The following is a 1162-amino-acid chain: Isoleucine--tRNA ligase (1162 aa).

Residues 50 to 60 carry the 'HIGH' region motif; the sequence is PSANGMPGIHH. Positions 710–714 match the 'KMSKS' region motif; that stretch reads KMSKR. Lys-713 contacts ATP.

It belongs to the class-I aminoacyl-tRNA synthetase family. IleS type 2 subfamily. Monomer. Requires Zn(2+) as cofactor.

It is found in the cytoplasm. It catalyses the reaction tRNA(Ile) + L-isoleucine + ATP = L-isoleucyl-tRNA(Ile) + AMP + diphosphate. In terms of biological role, catalyzes the attachment of isoleucine to tRNA(Ile). As IleRS can inadvertently accommodate and process structurally similar amino acids such as valine, to avoid such errors it has two additional distinct tRNA(Ile)-dependent editing activities. One activity is designated as 'pretransfer' editing and involves the hydrolysis of activated Val-AMP. The other activity is designated 'posttransfer' editing and involves deacylation of mischarged Val-tRNA(Ile). The sequence is that of Isoleucine--tRNA ligase from Bacteroides thetaiotaomicron (strain ATCC 29148 / DSM 2079 / JCM 5827 / CCUG 10774 / NCTC 10582 / VPI-5482 / E50).